Here is a 130-residue protein sequence, read N- to C-terminus: Small ribosomal subunit protein uS9 (130 aa).

Belongs to the universal ribosomal protein uS9 family.

The polypeptide is Small ribosomal subunit protein uS9 (Bacillus thuringiensis subsp. konkukian (strain 97-27)).